A 247-amino-acid polypeptide reads, in one-letter code: OCIA domain-containing protein 1 (247 aa).

Residues 1–112 (MNGRADFREP…KKLENSPLGE (112 aa)) form the OCIA domain. Phosphoserine is present on residues S108, S116, and S123. 2 disordered regions span residues 113-153 (ALRS…ADNI) and 167-230 (SASM…MQER). Polar residues-rich tracts occupy residues 136-146 (SNVSGQSSFGT) and 168-177 (ASMNESTPTG). Basic and acidic residues-rich tracts occupy residues 192 to 210 (ESPK…KNRE) and 218 to 230 (HKTD…MQER). The residue at position 193 (S193) is a Phosphoserine.

This sequence belongs to the OCIAD1 family. As to quaternary structure, interacts with OCIAD2. Interacts with STAT3. Expressed at high levels in the brain and at lower levels in the heart, ovary, testis and kidney. Expression is strongest in embryonic stem cells and in the blood vessels.

The protein resides in the endosome. Its function is as follows. Maintains stem cell potency. Increases STAT3 phosphorylation and controls ERK phosphorylation. May act as a scaffold, increasing STAT3 recruitment onto endosomes. The polypeptide is OCIA domain-containing protein 1 (Mus musculus (Mouse)).